Here is a 248-residue protein sequence, read N- to C-terminus: Type III pantothenate kinase (248 aa).

An ATP-binding site is contributed by 6–13 (ELGNSQLK). Substrate contacts are provided by residues tyrosine 94 and 101–104 (GVDR). The active-site Proton acceptor is aspartate 103. Position 123 (aspartate 123) interacts with K(+). Threonine 126 serves as a coordination point for ATP. Threonine 179 contacts substrate.

It belongs to the type III pantothenate kinase family. In terms of assembly, homodimer. Requires NH4(+) as cofactor. It depends on K(+) as a cofactor.

Its subcellular location is the cytoplasm. It catalyses the reaction (R)-pantothenate + ATP = (R)-4'-phosphopantothenate + ADP + H(+). Its pathway is cofactor biosynthesis; coenzyme A biosynthesis; CoA from (R)-pantothenate: step 1/5. Catalyzes the phosphorylation of pantothenate (Pan), the first step in CoA biosynthesis. In Hydrogenovibrio crunogenus (strain DSM 25203 / XCL-2) (Thiomicrospira crunogena), this protein is Type III pantothenate kinase.